The primary structure comprises 374 residues: MMHLENTPTFHGFHMPAEWEPHSQCWIGWPERADNWRDGAVHAQLVFTRVAAAISRFEKVTVCASSAQWENARNQLPDHVRVVEISSNDSWFRDIGPTFVVRRETSKSDDAEHRIAGIDWTFNSWGGLEDGCYCDWSLDSLVKKKILDVERIPRFSHSMVLEGGSIHVDGEGTCITTEECLLNKNRNPHLSKSQIEDELKAYLGVRKVIWLPRGLYGDDDTNGHVDNMCCFVRPGAVLLSWTDDKTDPQYERSEEAYSLFSSVTDANGRKFEVIKLHVPGPLYMTEKEAAGVFQDDGAKPRLPGTRLAASYVNFYIANGAIIAPQFGDKKWDDEAIRVLSKTFPHHEVVGIEGSREIVLSGGNIHCITQQQPAI.

Residues aspartate 220 and aspartate 226 each contribute to the agmatine site. Cysteine 366 functions as the Amidino-cysteine intermediate in the catalytic mechanism.

The protein belongs to the agmatine deiminase family. Forms homodimers.

The catalysed reaction is agmatine + H2O = N-carbamoylputrescine + NH4(+). The protein operates within amine and polyamine biosynthesis; putrescine biosynthesis via agmatine pathway; N-carbamoylputrescine from agmatine: step 1/1. Its function is as follows. Mediates the hydrolysis of agmatine into N-carbamoylputrescine in the arginine decarboxylase (ADC) pathway of putrescine biosynthesis, a basic polyamine. The sequence is that of Agmatine deiminase from Medicago truncatula (Barrel medic).